Here is a 231-residue protein sequence, read N- to C-terminus: Lipoprotein-releasing system ATP-binding protein LolD 2 (231 aa).

One can recognise an ABC transporter domain in the interval 6 to 230 (VEARSLSKSF…DGRLVGQDPA (225 aa)). ATP is bound at residue 42 to 49 (GPSGSGKS).

This sequence belongs to the ABC transporter superfamily. Lipoprotein translocase (TC 3.A.1.125) family. As to quaternary structure, the complex is composed of two ATP-binding proteins (LolD) and two transmembrane proteins (LolC and LolE).

It is found in the cell inner membrane. Its function is as follows. Part of the ABC transporter complex LolCDE involved in the translocation of mature outer membrane-directed lipoproteins, from the inner membrane to the periplasmic chaperone, LolA. Responsible for the formation of the LolA-lipoprotein complex in an ATP-dependent manner. In Rhodospirillum rubrum (strain ATCC 11170 / ATH 1.1.1 / DSM 467 / LMG 4362 / NCIMB 8255 / S1), this protein is Lipoprotein-releasing system ATP-binding protein LolD 2.